A 630-amino-acid polypeptide reads, in one-letter code: Sodium-dependent serotonin transporter (630 aa).

Topologically, residues 1–87 (METTPLNSQK…ERETWGKKMD (87 aa)) are cytoplasmic. Residues 23 to 60 (ENGVLQKGVPTTADRAEPSQISNGYSAVPSTSAGDEAS) form a disordered region. Residues 41–55 (SQISNGYSAVPSTSA) are compositionally biased toward polar residues. Residue tyrosine 47 is modified to Phosphotyrosine. Residues 88-112 (FLLSVIGYAVDLGNIWRFPYICYQN) traverse the membrane as a helical segment. Glycine 94, alanine 96, valine 97, aspartate 98, and asparagine 101 together coordinate Na(+). Aspartate 98 is a serotonin binding site. Topologically, residues 113–115 (GGG) are extracellular. The chain crosses the membrane as a helical span at residues 116–135 (AFLLPYTIMAIFGGIPLFYM). Topologically, residues 136–160 (ELALGQYHRNGCISIWRKICPIFKG) are cytoplasmic. Tyrosine 142 is modified (phosphotyrosine). Residues 161–186 (IGYAICIIAFYIASYYNTIIAWALYY) traverse the membrane as a helical segment. Over 187-252 (LISSLTDRLP…KGLQDLGTIS (66 aa)) the chain is Extracellular. Cysteine 200 and cysteine 209 form a disulfide bridge. N-linked (GlcNAc...) asparagine glycosylation is found at asparagine 208 and asparagine 217. A helical transmembrane segment spans residues 253–271 (WQLTLCIVLIFTVIYFSIW). At 272–277 (KGVKTS) the chain is on the cytoplasmic side. The residue at position 276 (threonine 276) is a Phosphothreonine. The chain crosses the membrane as a helical span at residues 278 to 297 (GKVVWVTATFPYIVLSVLLV). The Extracellular segment spans residues 298 to 324 (RGATLPGAWRGVVFYLKPNWQKLLETG). Residues 325-347 (VWVDAAAQIFFSLGPGFGVLLAF) traverse the membrane as a helical segment. Serine 336 contacts Na(+). Residues 348–360 (ASYNKFNNNCYQD) lie on the Cytoplasmic side of the membrane. The chain crosses the membrane as a helical span at residues 361-380 (ALVTSVVNCMTSFVSGFVIF). A Na(+)-binding site is contributed by asparagine 368. Residues 381–421 (TVLGYMAEMRNEDVSEVAKDAGPSLLFITYAEAIANMPAST) are Extracellular-facing. The helical transmembrane segment at 422-443 (FFAIIFFLMLITLGLDSTFAGL) threads the bilayer. Na(+) contacts are provided by leucine 434, aspartate 437, and serine 438. Threonine 439 contributes to the serotonin binding site. Residues 444-463 (EGVITAVLDEFPHIWAKRRE) are Cytoplasmic-facing. A helical transmembrane segment spans residues 464-483 (WFVLIVVITCVLGSLLTLTS). Residues 484–494 (GGAYVVTLLEE) lie on the Extracellular side of the membrane. Serotonin is bound by residues glutamate 494 and tyrosine 495. A helical membrane pass occupies residues 495–516 (YATGPAVLTVALIEAVAVSWFY). Over 517 to 538 (GITQFCSDVKEMLGFSPGWFWR) the chain is Cytoplasmic. Residues 539 to 558 (ICWVAISPLFLLFIICSFLM) form a helical membrane-spanning segment. Residues phenylalanine 556 and serine 559 each coordinate serotonin. Topologically, residues 559 to 574 (SPPQLRLFQYNYPHWS) are extracellular. A helical membrane pass occupies residues 575 to 595 (IVLGYCIGMSSVICIPTYIIY). Over 596-630 (RLISTPGTLKERIIKSITPETPTEIPCGDIRMNAV) the chain is Cytoplasmic. Residues 616–624 (TPTEIPCGD) form an interaction with RAB4A region.

The protein belongs to the sodium:neurotransmitter symporter (SNF) (TC 2.A.22) family. SLC6A4 subfamily. Monomer or homooligomer. Interacts with TGFB1I1. Interacts with SEC23A, SEC24C and PATJ. Interacts with NOS1; the interaction may diminish the cell surface localization of SERT in the brain and, correspondingly, reduce serotonin reuptake. Interacts (via C-terminus) with SCAMP2; the interaction is direct and retains transporter molecules intracellularly. Interacts with filamentous actin and STX1A. Interacts (via the N-terminus) with STX1A (via the H3 domain); this interaction regulates SLC4A6 channel conductance. Interacts with ITGAV:ITGB3. Interacts (via C-terminus) with ITGB3; this interaction regulates SLC6A4 trafficking. Phosphorylation at Thr-276 increases 5-HT uptake and is required for cGMP-mediated SERT regulation. As to expression, expressed in the intestinal crypt epithelial cells and myenteric neurons of the small intestine (at protein level). Expressed in the brain.

It localises to the cell membrane. The protein localises to the endomembrane system. Its subcellular location is the endosome membrane. It is found in the synapse. The protein resides in the cell junction. It localises to the focal adhesion. The protein localises to the cell projection. Its subcellular location is the neuron projection. The catalysed reaction is serotonin(out) + K(+)(in) + Na(+)(out) + H(+)(in) = serotonin(in) + K(+)(out) + Na(+)(in) + H(+)(out). Serotonin transporter that cotransports serotonin with one Na(+) ion in exchange for one K(+) ion and possibly one proton in an overall electroneutral transport cycle. Transports serotonin across the plasma membrane from the extracellular compartment to the cytosol thus limiting serotonin intercellular signaling. Essential for serotonin homeostasis in the central nervous system. In the developing somatosensory cortex, acts in glutamatergic neurons to control serotonin uptake and its trophic functions accounting for proper spatial organization of cortical neurons and elaboration of sensory circuits. In the mature cortex, acts primarily in brainstem raphe neurons to mediate serotonin uptake from the synaptic cleft back into the pre-synaptic terminal thus terminating serotonin signaling at the synapse. Modulates mucosal serotonin levels in the gastrointestinal tract through uptake and clearance of serotonin in enterocytes. Required for enteric neurogenesis and gastrointestinal reflexes. Regulates blood serotonin levels by ensuring rapid high affinity uptake of serotonin from plasma to platelets, where it is further stored in dense granules via vesicular monoamine transporters and then released upon stimulation. Mechanistically, the transport cycle starts with an outward-open conformation having Na1(+) and Cl(-) sites occupied. The binding of a second extracellular Na2(+) ion and serotonin substrate leads to structural changes to outward-occluded to inward-occluded to inward-open, where the Na2(+) ion and serotonin are released into the cytosol. Binding of intracellular K(+) ion induces conformational transitions to inward-occluded to outward-open and completes the cycle by releasing K(+) possibly together with a proton bound to Asp-98 into the extracellular compartment. Na1(+) and Cl(-) ions remain bound throughout the transport cycle. Additionally, displays serotonin-induced channel-like conductance for monovalent cations, mainly Na(+) ions. The channel activity is uncoupled from the transport cycle and may contribute to the membrane resting potential or excitability. The protein is Sodium-dependent serotonin transporter (Slc6a4) of Rattus norvegicus (Rat).